We begin with the raw amino-acid sequence, 521 residues long: Probable cytochrome P450 12d1 proximal, mitochondrial (521 aa).

The transit peptide at 1–19 (MNTLSSARSVAIYVGPVRS) directs the protein to the mitochondrion. Cys467 is a binding site for heme.

The protein belongs to the cytochrome P450 family. It depends on heme as a cofactor.

The protein localises to the mitochondrion membrane. The protein is Probable cytochrome P450 12d1 proximal, mitochondrial (Cyp12d1-p) of Drosophila melanogaster (Fruit fly).